A 142-amino-acid polypeptide reads, in one-letter code: MSYSNILVAVAVTPESQQLLAKAVSIARPVKGHISLITLASDPEMYNQLAAPMLEDLRNVMQEETQSFLDKLIQDAGYPVDKTFIAYGELSEHILEVCRKHHFDLVICGNHNHSFFSRASCSAKRVITSSEVDVLLVPLTGD.

It belongs to the universal stress protein A family.

It localises to the cytoplasm. Its function is as follows. Required for resistance to DNA-damaging agents. The sequence is that of Universal stress protein C (uspC) from Escherichia coli O6:H1 (strain CFT073 / ATCC 700928 / UPEC).